The sequence spans 170 residues: Adenine phosphoribosyltransferase (170 aa).

It belongs to the purine/pyrimidine phosphoribosyltransferase family. Homodimer.

Its subcellular location is the cytoplasm. The catalysed reaction is AMP + diphosphate = 5-phospho-alpha-D-ribose 1-diphosphate + adenine. It functions in the pathway purine metabolism; AMP biosynthesis via salvage pathway; AMP from adenine: step 1/1. Its function is as follows. Catalyzes a salvage reaction resulting in the formation of AMP, that is energically less costly than de novo synthesis. This is Adenine phosphoribosyltransferase from Fusobacterium nucleatum subsp. nucleatum (strain ATCC 25586 / DSM 15643 / BCRC 10681 / CIP 101130 / JCM 8532 / KCTC 2640 / LMG 13131 / VPI 4355).